A 293-amino-acid chain; its full sequence is Ribosomal protein L11 methyltransferase (293 aa).

S-adenosyl-L-methionine contacts are provided by Thr-145, Gly-166, Asp-188, and Asn-230.

The protein belongs to the methyltransferase superfamily. PrmA family.

Its subcellular location is the cytoplasm. The catalysed reaction is L-lysyl-[protein] + 3 S-adenosyl-L-methionine = N(6),N(6),N(6)-trimethyl-L-lysyl-[protein] + 3 S-adenosyl-L-homocysteine + 3 H(+). Its function is as follows. Methylates ribosomal protein L11. This is Ribosomal protein L11 methyltransferase from Escherichia coli O139:H28 (strain E24377A / ETEC).